Reading from the N-terminus, the 160-residue chain is Transcription elongation factor GreA (160 aa).

The stretch at 12–76 forms a coiled coil; that stretch reads EGVKKLEEEL…QLENMLKNAS (65 aa).

The protein belongs to the GreA/GreB family.

Necessary for efficient RNA polymerase transcription elongation past template-encoded arresting sites. The arresting sites in DNA have the property of trapping a certain fraction of elongating RNA polymerases that pass through, resulting in locked ternary complexes. Cleavage of the nascent transcript by cleavage factors such as GreA or GreB allows the resumption of elongation from the new 3'terminus. GreA releases sequences of 2 to 3 nucleotides. This Clostridium botulinum (strain Hall / ATCC 3502 / NCTC 13319 / Type A) protein is Transcription elongation factor GreA.